The primary structure comprises 302 residues: Bifunctional protein FolD (302 aa).

NADP(+) is bound by residues 165-167 (GRS), S190, and I231.

This sequence belongs to the tetrahydrofolate dehydrogenase/cyclohydrolase family. Homodimer.

It catalyses the reaction (6R)-5,10-methylene-5,6,7,8-tetrahydrofolate + NADP(+) = (6R)-5,10-methenyltetrahydrofolate + NADPH. It carries out the reaction (6R)-5,10-methenyltetrahydrofolate + H2O = (6R)-10-formyltetrahydrofolate + H(+). It participates in one-carbon metabolism; tetrahydrofolate interconversion. In terms of biological role, catalyzes the oxidation of 5,10-methylenetetrahydrofolate to 5,10-methenyltetrahydrofolate and then the hydrolysis of 5,10-methenyltetrahydrofolate to 10-formyltetrahydrofolate. The sequence is that of Bifunctional protein FolD from Prochlorococcus marinus (strain SARG / CCMP1375 / SS120).